Here is a 248-residue protein sequence, read N- to C-terminus: MPRGKRRAADTISDNMDHGQPKRARTSYTSIPTQQSSRRHIRLEDGFSQKRCMAWFQEYTTPDEPETLGPDGMEKFCEDIGVEPENIVMLVLAYKMGATQMGFFSQQEWLKGLTELDCDSAAKMVVKLDYLRSILNDPNSFKSIYRYAYDFAKDSDQRCMDILTAKAMLQLLLGKHWPLYPQFAQFLEQSKYKAINKDQWCNILEFSRTISIDLSNYDIDGAWPVMLDEFVEWLRLQRSQVTSTTGSS.

The disordered stretch occupies residues 1-35 (MPRGKRRAADTISDNMDHGQPKRARTSYTSIPTQQ). Residues 26–35 (TSYTSIPTQQ) show a composition bias toward polar residues. Residues 47-235 (FSQKRCMAWF…MLDEFVEWLR (189 aa)) enclose the DCUN1 domain.

It is found in the nucleus. Functionally, inhibits neddylation of cullin components of SCF-type E3 ubiquitin ligase complexes and thus regulates SCF-type complex activity. Essential for development. Function inhibits cell proliferation and cell growth. In Drosophila melanogaster (Fruit fly), this protein is DCN1-like protein 4.